Reading from the N-terminus, the 1047-residue chain is UPF0182 protein Mlut_14990 (1047 aa).

Gly residues-rich tracts occupy residues 1–27 (MSFG…GQSG) and 49–59 (GPGGPFGGGGS). The segment at 1-66 (MSFGQGGGGP…GGSSAARGRG (66 aa)) is disordered. 7 helical membrane passes run 71 to 91 (PSAL…FVVF), 114 to 134 (VLAK…AVWL), 168 to 188 (LVFL…AMNG), 214 to 234 (FFMA…SVVL), 266 to 286 (AHIG…FWLN), 314 to 334 (AILA…VVSG), and 341 to 361 (IGTA…PFIV). 3 disordered regions span residues 544-568 (GAPA…TFSG), 941-965 (GDSG…PTAP), and 1007-1047 (EALK…TPSG). The segment covering 555-565 (TADSQEDTAYT) has biased composition (polar residues). The span at 1015-1037 (ADDALGGDAPAQEQAPAEASPAP) shows a compositional bias: low complexity. Residues 1038–1047 (SSSPSPTPSG) are compositionally biased toward pro residues.

Belongs to the UPF0182 family.

The protein localises to the cell membrane. The polypeptide is UPF0182 protein Mlut_14990 (Micrococcus luteus (strain ATCC 4698 / DSM 20030 / JCM 1464 / CCM 169 / CCUG 5858 / IAM 1056 / NBRC 3333 / NCIMB 9278 / NCTC 2665 / VKM Ac-2230) (Micrococcus lysodeikticus)).